The chain runs to 371 residues: MSNPLSELSAAGVAVWLDDISRDRLRTGNLADLVANRSVVGVTSNPTIFQKAIASSDLYNEQLRDLKVRGVDVGEAVRAITAADVREACDVLRGVYDASGGVDGRVSLEVDPRLAHEAERTVAEARALWWLVDRPNLFIKIPATQDGLPAITETLAQGISVNVTLIFGLDRYDAVIDAFMSGVEQAIEAGRDVSDLASVASFFVSRVDSEVDARLDKIGTPEAKALHAKTAIANARLAYERYEKAFATPRWKALAAKGAKPQRPLWASTSTKDPSLPDTIYVSELIAPGTVNTMPEATLQAFADHGQVKGETIRPHYDDARQVFAALAAVGVDIDDVIETLETQGVQKFEDSWNQLLGTIAQQLGRSGTDG.

Lys-140 serves as the catalytic Schiff-base intermediate with substrate.

Belongs to the transaldolase family. Type 2 subfamily.

It is found in the cytoplasm. It catalyses the reaction D-sedoheptulose 7-phosphate + D-glyceraldehyde 3-phosphate = D-erythrose 4-phosphate + beta-D-fructose 6-phosphate. It participates in carbohydrate degradation; pentose phosphate pathway; D-glyceraldehyde 3-phosphate and beta-D-fructose 6-phosphate from D-ribose 5-phosphate and D-xylulose 5-phosphate (non-oxidative stage): step 2/3. Its function is as follows. Transaldolase is important for the balance of metabolites in the pentose-phosphate pathway. In Frankia alni (strain DSM 45986 / CECT 9034 / ACN14a), this protein is Transaldolase.